The following is a 40-amino-acid chain: Large ribosomal subunit protein bL36A (40 aa).

This sequence belongs to the bacterial ribosomal protein bL36 family.

This is Large ribosomal subunit protein bL36A from Saccharopolyspora erythraea (strain ATCC 11635 / DSM 40517 / JCM 4748 / NBRC 13426 / NCIMB 8594 / NRRL 2338).